A 221-amino-acid chain; its full sequence is Immediate early response gene 2 protein (221 aa).

Met-1 carries the N-acetylmethionine modification. The disordered stretch occupies residues 105 to 155; it reads ETPALCDPPPARVSRKRRSSSDLSDGSDAGLVPSKKARLEEVEGEATSEVP. A compositionally biased stretch (low complexity) spans 125 to 136; that stretch reads SDLSDGSDAGLV.

The protein belongs to the IER family.

The protein localises to the cytoplasm. It is found in the nucleus. DNA-binding protein that seems to act as a transcription factor. Involved in the regulation of neuronal differentiation, acts upon JNK-signaling pathway activation and plays a role in neurite outgrowth in hippocampal cells. May mediate with FIBP FGF-signaling in the establishment of laterality in the embryo. Promotes cell motility, seems to stimulate tumor metastasis. The polypeptide is Immediate early response gene 2 protein (Ier2) (Mus musculus (Mouse)).